The following is a 235-amino-acid chain: NAD(P)H-hydrate epimerase (235 aa).

Positions 18-221 constitute a YjeF N-terminal domain; that stretch reads AAKIDEQLFS…GLVEEHGLQM (204 aa). 65–69 contacts (6S)-NADPHX; sequence NNGGD. The K(+) site is built by N66 and D127. (6S)-NADPHX-binding positions include 131-137 and D160; that span reads GFSFKPP. S163 is a binding site for K(+).

This sequence belongs to the NnrE/AIBP family. Requires K(+) as cofactor.

It carries out the reaction (6R)-NADHX = (6S)-NADHX. The enzyme catalyses (6R)-NADPHX = (6S)-NADPHX. Its function is as follows. Catalyzes the epimerization of the S- and R-forms of NAD(P)HX, a damaged form of NAD(P)H that is a result of enzymatic or heat-dependent hydration. This is a prerequisite for the S-specific NAD(P)H-hydrate dehydratase to allow the repair of both epimers of NAD(P)HX. The polypeptide is NAD(P)H-hydrate epimerase (Caenorhabditis briggsae).